We begin with the raw amino-acid sequence, 487 residues long: UDP-N-acetylmuramoyl-L-alanyl-D-glutamate--2,6-diaminopimelate ligase (487 aa).

Residues L23 and S25 each contribute to the UDP-N-acetyl-alpha-D-muramoyl-L-alanyl-D-glutamate site. An ATP-binding site is contributed by 108–114 (GTNGKTS). Residues 150–151 (TT), S177, Q183, and R185 contribute to the UDP-N-acetyl-alpha-D-muramoyl-L-alanyl-D-glutamate site. K217 is subject to N6-carboxylysine. Residues R378, 402-405 (DNPR), G453, and E457 contribute to the meso-2,6-diaminopimelate site. Residues 402-405 (DNPR) carry the Meso-diaminopimelate recognition motif motif.

It belongs to the MurCDEF family. MurE subfamily. Mg(2+) serves as cofactor. Carboxylation is probably crucial for Mg(2+) binding and, consequently, for the gamma-phosphate positioning of ATP.

It is found in the cytoplasm. It carries out the reaction UDP-N-acetyl-alpha-D-muramoyl-L-alanyl-D-glutamate + meso-2,6-diaminopimelate + ATP = UDP-N-acetyl-alpha-D-muramoyl-L-alanyl-gamma-D-glutamyl-meso-2,6-diaminopimelate + ADP + phosphate + H(+). It participates in cell wall biogenesis; peptidoglycan biosynthesis. Functionally, catalyzes the addition of meso-diaminopimelic acid to the nucleotide precursor UDP-N-acetylmuramoyl-L-alanyl-D-glutamate (UMAG) in the biosynthesis of bacterial cell-wall peptidoglycan. The polypeptide is UDP-N-acetylmuramoyl-L-alanyl-D-glutamate--2,6-diaminopimelate ligase (Pseudomonas aeruginosa (strain ATCC 15692 / DSM 22644 / CIP 104116 / JCM 14847 / LMG 12228 / 1C / PRS 101 / PAO1)).